The following is a 77-amino-acid chain: uncharacterized protein (77 aa).

The next 2 helical transmembrane spans lie at 3–23 and 35–55; these read FNFIEFLGYMATFFVAASFLF and IGAILFVIYSLIITAYPVALL.

The protein localises to the cell membrane. This is an uncharacterized protein from Haemophilus influenzae (strain ATCC 51907 / DSM 11121 / KW20 / Rd).